Consider the following 63-residue polypeptide: Large ribosomal subunit protein bL32 (63 aa).

Belongs to the bacterial ribosomal protein bL32 family.

This chain is Large ribosomal subunit protein bL32, found in Lactobacillus delbrueckii subsp. bulgaricus (strain ATCC 11842 / DSM 20081 / BCRC 10696 / JCM 1002 / NBRC 13953 / NCIMB 11778 / NCTC 12712 / WDCM 00102 / Lb 14).